The following is a 146-amino-acid chain: Large ribosomal subunit protein uL15 (146 aa).

The tract at residues 1 to 56 is disordered; it reads MKLHELKAAEGANKASKRVGRGTGSGLGKTSGRGQNGQNSRSGGGVRPGFEGGQMP. Gly residues-rich tracts occupy residues 21–35 and 42–52; these read RGTGSGLGKTSGRGQ and SGGGVRPGFEG.

This sequence belongs to the universal ribosomal protein uL15 family. As to quaternary structure, part of the 50S ribosomal subunit.

Binds to the 23S rRNA. In Clostridium botulinum (strain ATCC 19397 / Type A), this protein is Large ribosomal subunit protein uL15.